A 633-amino-acid chain; its full sequence is 1-deoxy-D-xylulose-5-phosphate synthase (633 aa).

Thiamine diphosphate is bound by residues histidine 72 and glycine 113–serine 115. Aspartate 144 is a Mg(2+) binding site. Thiamine diphosphate-binding positions include glycine 145 to alanine 146, asparagine 173, tyrosine 284, and glutamate 367. Asparagine 173 lines the Mg(2+) pocket.

This sequence belongs to the transketolase family. DXPS subfamily. In terms of assembly, homodimer. Mg(2+) serves as cofactor. Thiamine diphosphate is required as a cofactor.

The catalysed reaction is D-glyceraldehyde 3-phosphate + pyruvate + H(+) = 1-deoxy-D-xylulose 5-phosphate + CO2. It functions in the pathway metabolic intermediate biosynthesis; 1-deoxy-D-xylulose 5-phosphate biosynthesis; 1-deoxy-D-xylulose 5-phosphate from D-glyceraldehyde 3-phosphate and pyruvate: step 1/1. Functionally, catalyzes the acyloin condensation reaction between C atoms 2 and 3 of pyruvate and glyceraldehyde 3-phosphate to yield 1-deoxy-D-xylulose-5-phosphate (DXP). The sequence is that of 1-deoxy-D-xylulose-5-phosphate synthase from Lysinibacillus sphaericus (strain C3-41).